Here is a 490-residue protein sequence, read N- to C-terminus: Cytochrome P450 71A21 (490 aa).

Residues 1 to 21 (MESMTMIILQSLIIFITILFF) form a helical membrane-spanning segment. Cys-432 provides a ligand contact to heme.

The protein belongs to the cytochrome P450 family. Heme serves as cofactor.

The protein resides in the membrane. This chain is Cytochrome P450 71A21 (CYP71A21), found in Arabidopsis thaliana (Mouse-ear cress).